Consider the following 906-residue polypeptide: Coatomer subunit beta' (906 aa).

WD repeat units follow at residues Ala13–Thr52, Val55–Met94, Ala97–Gln136, Gly140–Thr180, Gly183–Thr224, Gly227–Thr266, Ser350–Phe388, and Ser390–Lys425. An N6-acetyllysine modification is found at Lys627. The WD 9 repeat unit spans residues Ile746–Lys783. Residues Glu837–Lys872 are disordered. Ser859 is subject to Phosphoserine. Thr861 carries the post-translational modification Phosphothreonine. The stretch at Thr866 to Asp891 forms a coiled coil.

This sequence belongs to the WD repeat COPB2 family. Oligomeric complex that consists of at least the alpha, beta, beta', gamma, delta, epsilon and zeta subunits. Probably interacts with PEX11A. Interacts with SCYL1. Interacts with JAGN1.

Its subcellular location is the cytoplasm. It is found in the cytosol. The protein resides in the golgi apparatus membrane. It localises to the cytoplasmic vesicle. The protein localises to the COPI-coated vesicle membrane. The coatomer is a cytosolic protein complex that binds to dilysine motifs and reversibly associates with Golgi non-clathrin-coated vesicles, which further mediate biosynthetic protein transport from the ER, via the Golgi up to the trans Golgi network. Coatomer complex is required for budding from Golgi membranes, and is essential for the retrograde Golgi-to-ER transport of dilysine-tagged proteins. In mammals, the coatomer can only be recruited by membranes associated to ADP-ribosylation factors (ARFs), which are small GTP-binding proteins; the complex also influences the Golgi structural integrity, as well as the processing, activity, and endocytic recycling of LDL receptors. Its function is as follows. This coatomer complex protein, essential for Golgi budding and vesicular trafficking, is a selective binding protein (RACK) for protein kinase C, epsilon type. It binds to Golgi membranes in a GTP-dependent manner. The sequence is that of Coatomer subunit beta' (COPB2) from Bos taurus (Bovine).